Here is a 657-residue protein sequence, read N- to C-terminus: MDEKGGTTSWGTSGQPSPSYDSRGFTDSPHYSDHLNDSRKGTHEGLSPTPFSNSNLIGKTSGRGSFSLYSRDSGLSGCQSSLLRQELGLGSPAQLSSSGKPETPYYSFSATSSRRRPKHDSVALDPLQAKKVRKVPGLPSSVYRPSPNSDDFNRESPSYPSPKPPTSMFASTFFMQDGTHSSSDLWSSSNGMSQPGFGGILGTSTSHMSQSGSYGSLHSHDRLSYPPHSVSPTDINTSLPPMSSFHRGSTSSSPYVAASHTPPVNGSDSIVGTKGNGAGGSQTGDALGKALASIYSPDHTSSSFPSNPSTPVGSPSPLTGASQWSRSGGQAPSSPNYENSLHSLKNRVEQQLHEHLQDAMSFLKDVCEQSRMEDRLDRLDDAIHVLRNHAVGPSTSLSGGHGDIHSLLGPSHNGPIGSLNSSYGASSLVAANRQASMVAAHREESVSLNSNHAVLPSTVSAQSTELNHKTQESYRALSGGLQSQSVAIGPTEIKSEHKEKDENIHEPPSSDDMKSDDESSQKDIKVSSRGRTSSTNEDEDLNPEQKIEREKERRMANNARERLRVRDINEAFKELGRMCQLHLKSEKPQTKLLILHQAVAVILSLEQQVRERNLNPKAACLKRREEEKVSAVSAEPPTPHPGSHPGLSETTNPMGHM.

Residues Met1–Tyr20 show a composition bias toward polar residues. 5 disordered regions span residues Met1 to Ser76, Leu89 to Asp285, Pro297 to Ser340, Val459 to Met555, and Lys628 to Met657. Residues His30 to His43 show a composition bias toward basic and acidic residues. 2 stretches are compositionally biased toward polar residues: residues Thr49 to Ser70 and Ala93 to Ser112. Positions Leu68–Leu89 are leucine-zipper. The Nuclear localization signal motif lies at Lys130–Pro136. Polar residues-rich tracts occupy residues Met168–Ser193, Gly202–Ser216, and Val230–Pro254. The span at Thr300–Pro311 shows a compositional bias: low complexity. The span at Val312–Ser340 shows a compositional bias: polar residues. Composition is skewed to basic and acidic residues over residues Ile493 to His505, Asp511 to Val526, and Pro543 to Met555. A bHLH domain is found at Glu552 to Leu605. Residues Gln607–Ser630 are class A specific domain. Positions Ser648–Met657 are enriched in polar residues.

As to quaternary structure, efficient DNA binding requires dimerization with another bHLH protein. Forms homo- or heterooligomers with myogenin, E12 and ITF2 proteins.

The protein resides in the nucleus. In terms of biological role, transcriptional regulator. Involved in the initiation of neuronal differentiation. Activates transcription by binding to the E box-containing promoter. The chain is Transcription factor 12 (TCF12) from Gallus gallus (Chicken).